A 656-amino-acid chain; its full sequence is UvrABC system protein C (656 aa).

The GIY-YIG domain occupies 16-95 (TDPGVYRFRD…IKEYSPRFNV (80 aa)). One can recognise a UVR domain in the interval 208–243 (GRFLRQLEAEMKQAAAAQEYERAARIRDDIQALRTV).

The protein belongs to the UvrC family. As to quaternary structure, interacts with UvrB in an incision complex.

The protein resides in the cytoplasm. The UvrABC repair system catalyzes the recognition and processing of DNA lesions. UvrC both incises the 5' and 3' sides of the lesion. The N-terminal half is responsible for the 3' incision and the C-terminal half is responsible for the 5' incision. The sequence is that of UvrABC system protein C from Thermobifida fusca (strain YX).